The primary structure comprises 221 residues: Ribosomal RNA small subunit methyltransferase G (221 aa).

S-adenosyl-L-methionine-binding positions include G85, L90, 138–139 (AE), and R151.

The protein belongs to the methyltransferase superfamily. RNA methyltransferase RsmG family.

It localises to the cytoplasm. It catalyses the reaction guanosine(527) in 16S rRNA + S-adenosyl-L-methionine = N(7)-methylguanosine(527) in 16S rRNA + S-adenosyl-L-homocysteine. Its function is as follows. Specifically methylates the N7 position of guanine in position 527 of 16S rRNA. This chain is Ribosomal RNA small subunit methyltransferase G, found in Caulobacter sp. (strain K31).